The primary structure comprises 167 residues: Neutrophilic granule protein (167 aa).

An N-terminal signal peptide occupies residues 1–21 (MAGLWKTFVLVVALAVVSCEA). A disordered region spans residues 122 to 141 (EDTQETSFNDKQDVSEKEKF).

It belongs to the cathelicidin family. In terms of assembly, monomer. Homodimer; disulfide-linked. In terms of tissue distribution, expressed in myeloid bone marrow cells. Expressed in neutrophilic precursors (at protein level). Expressed in myeloid bone marrow cells.

The protein resides in the secreted. Its subcellular location is the cytoplasmic granule. Functionally, acts as an inhibitor of cathepsin B (CTSB) activity. Plays a role as a negative regulator of tumor vascular development, cell invasion and metastasis. The protein is Neutrophilic granule protein of Mus musculus (Mouse).